The sequence spans 258 residues: 5'-nucleotidase SurE (258 aa).

Residues D13, D14, S44, and N92 each contribute to the a divalent metal cation site. The segment at 237-258 (SPLTAPHSTEHHDALDGIATEF) is disordered.

It belongs to the SurE nucleotidase family. A divalent metal cation is required as a cofactor.

It is found in the cytoplasm. The catalysed reaction is a ribonucleoside 5'-phosphate + H2O = a ribonucleoside + phosphate. Functionally, nucleotidase that shows phosphatase activity on nucleoside 5'-monophosphates. The chain is 5'-nucleotidase SurE from Halobacterium salinarum (strain ATCC 29341 / DSM 671 / R1).